Here is a 644-residue protein sequence, read N- to C-terminus: Putative aldehyde dehydrogenase-like protein YHR039C (644 aa).

A glycan (N-linked (GlcNAc...) asparagine) is linked at Asn-15. Residue Glu-354 is the Proton acceptor of the active site. The Nucleophile role is filled by Cys-389. Asn-565 and Asn-627 each carry an N-linked (GlcNAc...) asparagine glycan.

Belongs to the aldehyde dehydrogenase family. Post-translationally, N-glycosylated.

The protein resides in the endoplasmic reticulum. This Saccharomyces cerevisiae (strain ATCC 204508 / S288c) (Baker's yeast) protein is Putative aldehyde dehydrogenase-like protein YHR039C (MSC7).